The sequence spans 215 residues: Pyrrolidone-carboxylate peptidase (215 aa).

Residues Glu78, Cys141, and His165 contribute to the active site.

The protein belongs to the peptidase C15 family. In terms of assembly, homotetramer.

It is found in the cytoplasm. The catalysed reaction is Release of an N-terminal pyroglutamyl group from a polypeptide, the second amino acid generally not being Pro.. In terms of biological role, removes 5-oxoproline from various penultimate amino acid residues except L-proline. The chain is Pyrrolidone-carboxylate peptidase from Streptococcus suis (strain 98HAH33).